The sequence spans 257 residues: Protein vip1 (257 aa).

One can recognise an RRM domain in the interval 3-76 (NQVIVTNISP…NKIQITSEDG (74 aa)). Residues 74–99 (EDGGAASTTDQGGAGGDQAARQEDKP) are disordered. Residues 75–84 (DGGAASTTDQ) are compositionally biased toward low complexity. 2 positions are modified to phosphoserine: Ser132 and Ser177. The interval 217-257 (ARRLADAKNQAEGTASPASSTPTAPAEKEPTAPTTESKTTE) is disordered. Position 230 is a phosphothreonine (Thr230). The span at 230-257 (TASPASSTPTAPAEKEPTAPTTESKTTE) shows a compositional bias: low complexity. Ser232 and Ser235 each carry phosphoserine.

The sequence is that of Protein vip1 (vip1) from Schizosaccharomyces pombe (strain 972 / ATCC 24843) (Fission yeast).